Consider the following 557-residue polypeptide: High-affinity hexose transporter ght4 (557 aa).

Residues 1–9 (MGRTLTSVL) are Cytoplasmic-facing. Residues 10–30 (VVFISMAGWLGGADTGSISGI) form a helical membrane-spanning segment. Residues 31 to 58 (LGMRDFQSRFADRYNPITNSYSYSAWRQ) are Extracellular-facing. A helical transmembrane segment spans residues 59 to 79 (ALLTGTVNAGCLFGAMLSSPF). Over 80–87 (TEAIGKKY) the chain is Cytoplasmic. A helical transmembrane segment spans residues 88 to 108 (SIAFFSGCYIIGQILLVTAVP). The Extracellular segment spans residues 109–112 (SWVQ). Residues 113–133 (IMVGKLFTGLTIGALSVLSPG) form a helical membrane-spanning segment. Residues 134 to 144 (YQSEVAPPQIR) lie on the Cytoplasmic side of the membrane. Residues 145 to 165 (GAVVSTYQLFQTCGTLIAACI) form a helical membrane-spanning segment. The Extracellular portion of the chain corresponds to 166–179 (NMGTHKLRKTASWR). Residues 180 to 200 (TSFGINILWGIFLMVGVLFLP) form a helical membrane-spanning segment. Over 201–266 (ESPRYLIYKG…VFGKEVRYRT (66 aa)) the chain is Cytoplasmic. Residues 267-285 (VLGFLTMLLRELIGNNYYF) traverse the membrane as a helical segment. At 286 to 301 (YYATQVFKGTGMTDIF) the chain is on the extracellular side. The helical transmembrane segment at 302 to 322 (LPAVILGAINFGTTFGALYTI) threads the bilayer. The Cytoplasmic portion of the chain corresponds to 323–328 (DNLGRR). Residues 329 to 349 (NPLIFGAAFQSICFFIYAAVG) form a helical membrane-spanning segment. Residues 350–363 (DRKLIYKNGTSDHR) are Extracellular-facing. Asparagine 357 carries an N-linked (GlcNAc...) asparagine glycan. The chain crosses the membrane as a helical span at residues 364–384 (AGAVMIVFSCLFLFSYCCSWG). The Cytoplasmic portion of the chain corresponds to 385–404 (PMGWVIVGETFPIRYRSKCA). The chain crosses the membrane as a helical span at residues 405 to 425 (AVATSGNWLGNFMVSFFTPFI). Residues 426–432 (SNSIGFK) are Extracellular-facing. Residues 433 to 453 (LGYIYACINMTSAFQIFLMAK) form a helical membrane-spanning segment. The Cytoplasmic portion of the chain corresponds to 454–557 (ETKGLTLEEV…VSEESHPTWV (104 aa)). Over residues 492–514 (KEEEKREREKSKGYRGQEERFIE) the composition is skewed to basic and acidic residues. The interval 492-557 (KEEEKREREK…VSEESHPTWV (66 aa)) is disordered. Positions 524–536 (SSASSESFASAGA) are enriched in low complexity. The span at 547-557 (NVSEESHPTWV) shows a compositional bias: basic and acidic residues.

This sequence belongs to the major facilitator superfamily. Sugar transporter (TC 2.A.1.1) family.

It is found in the membrane. The sequence is that of High-affinity hexose transporter ght4 (ght4) from Schizosaccharomyces pombe (strain 972 / ATCC 24843) (Fission yeast).